Reading from the N-terminus, the 232-residue chain is Flavin-dependent thymidylate synthase (232 aa).

Residues 1 to 204 form the ThyX domain; that stretch reads MKIALLQHTP…PTIFRDAGPG (204 aa). Residues serine 55, 79-81, and glutamine 87 contribute to the FAD site; that span reads RHR. DUMP-binding positions include 76–79, 87–91, and arginine 143; these read QLVR and QQSQR. Positions 79-89 match the ThyX motif motif; it reads RHRIASYSQQS. Residues 159 to 161 and histidine 165 contribute to the FAD site; that span reads NAR. Arginine 170 provides a ligand contact to dUMP. Arginine 170 serves as the catalytic Involved in ionization of N3 of dUMP, leading to its activation.

This sequence belongs to the thymidylate synthase ThyX family. As to quaternary structure, homotetramer. It depends on FAD as a cofactor.

It catalyses the reaction dUMP + (6R)-5,10-methylene-5,6,7,8-tetrahydrofolate + NADPH + H(+) = dTMP + (6S)-5,6,7,8-tetrahydrofolate + NADP(+). It functions in the pathway pyrimidine metabolism; dTTP biosynthesis. In terms of biological role, catalyzes the reductive methylation of 2'-deoxyuridine-5'-monophosphate (dUMP) to 2'-deoxythymidine-5'-monophosphate (dTMP) while utilizing 5,10-methylenetetrahydrofolate (mTHF) as the methyl donor, and NADPH and FADH(2) as the reductant. This chain is Flavin-dependent thymidylate synthase, found in Geobacter sulfurreducens (strain ATCC 51573 / DSM 12127 / PCA).